Reading from the N-terminus, the 318-residue chain is Deoxyribose-phosphate aldolase (318 aa).

Asp-155 (proton donor/acceptor) is an active-site residue. Lys-218 functions as the Schiff-base intermediate with acetaldehyde in the catalytic mechanism. Lys-254 acts as the Proton donor/acceptor in catalysis.

The protein belongs to the DeoC/FbaB aldolase family. DeoC type 2 subfamily. As to quaternary structure, interacts with YBX1. Mainly expressed in liver, lung and colon.

Its subcellular location is the cytoplasm. The protein resides in the cytoplasmic granule. It is found in the nucleus. The catalysed reaction is 2-deoxy-D-ribose 5-phosphate = D-glyceraldehyde 3-phosphate + acetaldehyde. Its pathway is carbohydrate degradation; 2-deoxy-D-ribose 1-phosphate degradation; D-glyceraldehyde 3-phosphate and acetaldehyde from 2-deoxy-alpha-D-ribose 1-phosphate: step 2/2. Its function is as follows. Catalyzes a reversible aldol reaction between acetaldehyde and D-glyceraldehyde 3-phosphate to generate 2-deoxy-D-ribose 5-phosphate. Participates in stress granule (SG) assembly. May allow ATP production from extracellular deoxyinosine in conditions of energy deprivation. The protein is Deoxyribose-phosphate aldolase (DERA) of Homo sapiens (Human).